The sequence spans 210 residues: Large ribosomal subunit protein uL5 (210 aa).

Residues 188 to 210 (AKDDPKKAKTKRGPAYYAKKKKK) are disordered. The span at 195–210 (AKTKRGPAYYAKKKKK) shows a compositional bias: basic residues.

Belongs to the universal ribosomal protein uL5 family. As to quaternary structure, part of the 50S ribosomal subunit; part of the 5S rRNA/L5/L18/L25 subcomplex. Contacts the 5S rRNA and the P site tRNA. Forms a bridge to the 30S subunit in the 70S ribosome.

This is one of the proteins that bind and probably mediate the attachment of the 5S RNA into the large ribosomal subunit, where it forms part of the central protuberance. In the 70S ribosome it contacts protein S13 of the 30S subunit (bridge B1b), connecting the 2 subunits; this bridge is implicated in subunit movement. Contacts the P site tRNA; the 5S rRNA and some of its associated proteins might help stabilize positioning of ribosome-bound tRNAs. This chain is Large ribosomal subunit protein uL5, found in Cutibacterium acnes (strain DSM 16379 / KPA171202) (Propionibacterium acnes).